Here is a 144-residue protein sequence, read N- to C-terminus: Prefoldin subunit alpha (144 aa).

Belongs to the prefoldin alpha subunit family. As to quaternary structure, heterohexamer of two alpha and four beta subunits.

It is found in the cytoplasm. Molecular chaperone capable of stabilizing a range of proteins. Seems to fulfill an ATP-independent, HSP70-like function in archaeal de novo protein folding. This Methanococcus maripaludis (strain C7 / ATCC BAA-1331) protein is Prefoldin subunit alpha.